The primary structure comprises 212 residues: Adenylate kinase (212 aa).

10-15 serves as a coordination point for ATP; the sequence is GAGKGT. The interval 30-59 is NMP; the sequence is STGDMFRAAMANQTEMGVLAKSYIDKGELV. AMP-binding positions include Thr-31, Arg-36, 57–59, 86–89, and Gln-93; these read ELV and GYPR. Positions 127–159 are LID; it reads GRIIHRVTGETFHKVFNPPVDYKEEDYYQREDD. ATP contacts are provided by residues Arg-128 and 137–138; that span reads TF. AMP is bound by residues Arg-156 and Arg-167. Gln-195 lines the ATP pocket.

Belongs to the adenylate kinase family. In terms of assembly, monomer.

The protein resides in the cytoplasm. The catalysed reaction is AMP + ATP = 2 ADP. It functions in the pathway purine metabolism; AMP biosynthesis via salvage pathway; AMP from ADP: step 1/1. In terms of biological role, catalyzes the reversible transfer of the terminal phosphate group between ATP and AMP. Plays an important role in cellular energy homeostasis and in adenine nucleotide metabolism. In Streptococcus pneumoniae (strain JJA), this protein is Adenylate kinase.